Reading from the N-terminus, the 396-residue chain is S-adenosylmethionine synthase (396 aa).

Residue H16 participates in ATP binding. D18 serves as a coordination point for Mg(2+). E44 provides a ligand contact to K(+). E57 and Q100 together coordinate L-methionine. Residues 100-110 (QSVDIAQGVDR) form a flexible loop region. ATP contacts are provided by residues 165 to 167 (DAK), D240, 246 to 247 (RK), A263, and K267. D240 is an L-methionine binding site. K271 contributes to the L-methionine binding site.

Belongs to the AdoMet synthase family. In terms of assembly, homotetramer; dimer of dimers. Requires Mg(2+) as cofactor. K(+) serves as cofactor.

The protein resides in the cytoplasm. It carries out the reaction L-methionine + ATP + H2O = S-adenosyl-L-methionine + phosphate + diphosphate. The protein operates within amino-acid biosynthesis; S-adenosyl-L-methionine biosynthesis; S-adenosyl-L-methionine from L-methionine: step 1/1. Its function is as follows. Catalyzes the formation of S-adenosylmethionine (AdoMet) from methionine and ATP. The overall synthetic reaction is composed of two sequential steps, AdoMet formation and the subsequent tripolyphosphate hydrolysis which occurs prior to release of AdoMet from the enzyme. The protein is S-adenosylmethionine synthase of Pseudomonas syringae pv. tomato (strain ATCC BAA-871 / DC3000).